We begin with the raw amino-acid sequence, 467 residues long: tRNA-2-methylthio-N(6)-dimethylallyladenosine synthase (467 aa).

The MTTase N-terminal domain occupies 2-118 (PSVFIKTFGC…VAEIADNLLK (117 aa)). Residues cysteine 11, cysteine 47, cysteine 81, cysteine 159, cysteine 163, and cysteine 166 each coordinate [4Fe-4S] cluster. The Radical SAM core domain occupies 145–379 (TKAQPIAYVS…LEIQNKITME (235 aa)). Positions 382–445 (QKWVGQVVEI…GHTFYGTPLI (64 aa)) constitute a TRAM domain.

It belongs to the methylthiotransferase family. MiaB subfamily. Monomer. [4Fe-4S] cluster serves as cofactor.

Its subcellular location is the cytoplasm. It carries out the reaction N(6)-dimethylallyladenosine(37) in tRNA + (sulfur carrier)-SH + AH2 + 2 S-adenosyl-L-methionine = 2-methylsulfanyl-N(6)-dimethylallyladenosine(37) in tRNA + (sulfur carrier)-H + 5'-deoxyadenosine + L-methionine + A + S-adenosyl-L-homocysteine + 2 H(+). Its function is as follows. Catalyzes the methylthiolation of N6-(dimethylallyl)adenosine (i(6)A), leading to the formation of 2-methylthio-N6-(dimethylallyl)adenosine (ms(2)i(6)A) at position 37 in tRNAs that read codons beginning with uridine. The polypeptide is tRNA-2-methylthio-N(6)-dimethylallyladenosine synthase (Methylacidiphilum infernorum (isolate V4) (Methylokorus infernorum (strain V4))).